Reading from the N-terminus, the 364-residue chain is Succinate--CoA ligase [ADP-forming] subunit beta (364 aa).

The ATP-grasp domain maps to 9 to 229 (KNIFKKYGIP…EFEEYKNKEK (221 aa)). ATP-binding positions include K43, 50-52 (GRG), E89, L92, and E97. N189 and D203 together coordinate Mg(2+). Residues N246 and 303-305 (GIT) contribute to the substrate site.

This sequence belongs to the succinate/malate CoA ligase beta subunit family. Heterotetramer of two alpha and two beta subunits. It depends on Mg(2+) as a cofactor.

It carries out the reaction succinate + ATP + CoA = succinyl-CoA + ADP + phosphate. The enzyme catalyses GTP + succinate + CoA = succinyl-CoA + GDP + phosphate. It participates in carbohydrate metabolism; tricarboxylic acid cycle; succinate from succinyl-CoA (ligase route): step 1/1. Its function is as follows. Succinyl-CoA synthetase functions in the citric acid cycle (TCA), coupling the hydrolysis of succinyl-CoA to the synthesis of either ATP or GTP and thus represents the only step of substrate-level phosphorylation in the TCA. The beta subunit provides nucleotide specificity of the enzyme and binds the substrate succinate, while the binding sites for coenzyme A and phosphate are found in the alpha subunit. This is Succinate--CoA ligase [ADP-forming] subunit beta from Methanocaldococcus jannaschii (strain ATCC 43067 / DSM 2661 / JAL-1 / JCM 10045 / NBRC 100440) (Methanococcus jannaschii).